Consider the following 397-residue polypeptide: S-adenosylmethionine synthase (397 aa).

His15 is a binding site for ATP. Asp17 contributes to the Mg(2+) binding site. Glu43 lines the K(+) pocket. The L-methionine site is built by Glu56 and Gln99. The flexible loop stretch occupies residues 99–109 (QSPDIAMGVNK). ATP contacts are provided by residues 175-177 (DGK), 241-242 (RF), Asp250, 256-257 (RK), Ala273, and Lys277. Asp250 is a binding site for L-methionine. Residue Lys281 coordinates L-methionine.

The protein belongs to the AdoMet synthase family. Homotetramer; dimer of dimers. The cofactor is Mg(2+). K(+) is required as a cofactor.

It localises to the cytoplasm. It carries out the reaction L-methionine + ATP + H2O = S-adenosyl-L-methionine + phosphate + diphosphate. The protein operates within amino-acid biosynthesis; S-adenosyl-L-methionine biosynthesis; S-adenosyl-L-methionine from L-methionine: step 1/1. Functionally, catalyzes the formation of S-adenosylmethionine (AdoMet) from methionine and ATP. The overall synthetic reaction is composed of two sequential steps, AdoMet formation and the subsequent tripolyphosphate hydrolysis which occurs prior to release of AdoMet from the enzyme. The protein is S-adenosylmethionine synthase of Acetivibrio thermocellus (strain ATCC 27405 / DSM 1237 / JCM 9322 / NBRC 103400 / NCIMB 10682 / NRRL B-4536 / VPI 7372) (Clostridium thermocellum).